Reading from the N-terminus, the 507-residue chain is 3-[(3aS,4S,7aS)-7a-methyl-1,5-dioxo-octahydro-1H-inden-4-yl]propanoyl:CoA ligase (507 aa).

ATP contacts are provided by residues 177-185 (TSGTTGRSK), Asp-391, Arg-406, and Lys-497.

Belongs to the ATP-dependent AMP-binding enzyme family.

The catalysed reaction is 3-[(3aS,4S,7aS)-7a-methyl-1,5-dioxo-octahydro-1H-inden-4-yl]propanoate + ATP + CoA = 3-[(3aS,4S,7aS)-7a-methyl-1,5-dioxo-octahydro-1H-inden-4-yl]propanoyl-CoA + AMP + diphosphate. It carries out the reaction 5-hydroxy-3-[(3aS,4S,5R,7aS)-7a-methyl-1,5-dioxo-octahydro-1H-inden-4-yl]propanoate + ATP + CoA = 3-[(3aS,4S,5R,7aS)-5-hydroxy-7a-methyl-1-oxo-octahydro-1H-inden-4-yl]propanoyl-CoA + AMP + diphosphate. Its function is as follows. Involved in the catabolism of the rings C and D of cholesterol. Catalyzes the ATP-dependent CoA thioesterification of 3aalpha-H-4alpha(3'-propanoate)-7abeta-methylhexahydro-1,5-indanedione (HIP) to yield HIP-CoA. It can also use the hydroxylated analogs of HIP, 5alpha-OH HIP and 1beta-OH HIP. It requires that the side chain at C17 is completely removed. The protein is 3-[(3aS,4S,7aS)-7a-methyl-1,5-dioxo-octahydro-1H-inden-4-yl]propanoyl:CoA ligase of Mycobacterium tuberculosis (strain ATCC 25618 / H37Rv).